The primary structure comprises 559 residues: Methionine--tRNA ligase (559 aa).

The 'HIGH' region motif lies at proline 10–threonine 20. 4 residues coordinate Zn(2+): cysteine 141, cysteine 144, cysteine 154, and cysteine 157. Positions lysine 331–serine 335 match the 'KMSKS' region motif. Position 334 (lysine 334) interacts with ATP.

Belongs to the class-I aminoacyl-tRNA synthetase family. MetG type 1 subfamily. Requires Zn(2+) as cofactor.

The protein resides in the cytoplasm. It catalyses the reaction tRNA(Met) + L-methionine + ATP = L-methionyl-tRNA(Met) + AMP + diphosphate. Its function is as follows. Is required not only for elongation of protein synthesis but also for the initiation of all mRNA translation through initiator tRNA(fMet) aminoacylation. This Korarchaeum cryptofilum (strain OPF8) protein is Methionine--tRNA ligase.